A 429-amino-acid chain; its full sequence is UDP-N-acetylglucosamine 1-carboxyvinyltransferase (429 aa).

Position 22–23 (lysine 22–asparagine 23) interacts with phosphoenolpyruvate. UDP-N-acetyl-alpha-D-glucosamine is bound at residue arginine 102. Catalysis depends on cysteine 126, which acts as the Proton donor. Cysteine 126 is subject to 2-(S-cysteinyl)pyruvic acid O-phosphothioketal. UDP-N-acetyl-alpha-D-glucosamine contacts are provided by residues arginine 131–leucine 135, aspartate 316, and isoleucine 338.

This sequence belongs to the EPSP synthase family. MurA subfamily.

Its subcellular location is the cytoplasm. It catalyses the reaction phosphoenolpyruvate + UDP-N-acetyl-alpha-D-glucosamine = UDP-N-acetyl-3-O-(1-carboxyvinyl)-alpha-D-glucosamine + phosphate. It participates in cell wall biogenesis; peptidoglycan biosynthesis. Its function is as follows. Cell wall formation. Adds enolpyruvyl to UDP-N-acetylglucosamine. This chain is UDP-N-acetylglucosamine 1-carboxyvinyltransferase, found in Rhodopseudomonas palustris (strain BisB5).